The chain runs to 660 residues: Macrolide export ATP-binding/permease protein MacB (660 aa).

An ABC transporter domain is found at 10–248 (LVLENIVRKF…TDSQALYGKQ (239 aa)). 46-53 (GASGSGKS) contacts ATP. 4 helical membrane-spanning segments follow: residues 285–305 (FLTM…VALG), 532–552 (ILTL…GIGV), 593–613 (VIGG…FLLF), and 625–645 (SIIL…FSPA).

The protein belongs to the ABC transporter superfamily. Macrolide exporter (TC 3.A.1.122) family. In terms of assembly, homodimer.

The protein localises to the cell inner membrane. Its function is as follows. Non-canonical ABC transporter that contains transmembrane domains (TMD), which form a pore in the inner membrane, and an ATP-binding domain (NBD), which is responsible for energy generation. Confers resistance against macrolides. The polypeptide is Macrolide export ATP-binding/permease protein MacB (Bartonella henselae (strain ATCC 49882 / DSM 28221 / CCUG 30454 / Houston 1) (Rochalimaea henselae)).